A 1303-amino-acid chain; its full sequence is Protein STU1 (1303 aa).

Disordered regions lie at residues Arg-239 to Val-259, Ser-531 to Ser-664, and Glu-953 to His-977. Positions Arg-249 to Val-259 are enriched in polar residues. Residues Ser-554–Gln-568 show a composition bias toward basic and acidic residues. Over residues Ser-573 to Ile-583 the composition is skewed to polar residues. Residues Ser-596 to His-609 show a composition bias toward basic and acidic residues. Positions Ser-618–Pro-629 are enriched in polar residues. The span at Lys-634–Pro-648 shows a compositional bias: basic and acidic residues. Polar residues-rich tracts occupy residues Arg-653–Ser-664 and Ser-955–Arg-972.

Belongs to the CLASP family. In terms of assembly, interacts with microtubules.

The protein localises to the cytoplasm. It localises to the cytoskeleton. Its subcellular location is the nucleus. It is found in the spindle. In terms of biological role, microtubule binding protein that promotes the stabilization of dynamic microtubules. Required for mitotic spindle formation. In Candida albicans (strain SC5314 / ATCC MYA-2876) (Yeast), this protein is Protein STU1 (STU1).